The following is an 837-amino-acid chain: Vacuolar membrane protease (837 aa).

Residues Met-1–Lys-36 are Cytoplasmic-facing. Residues Thr-37–Asp-57 form a helical membrane-spanning segment. At Asn-58–Arg-355 the chain is on the vacuolar side. N-linked (GlcNAc...) asparagine glycosylation occurs at Asn-143. Zn(2+) contacts are provided by His-157 and Asp-169. Residue Glu-201 is the Proton acceptor of the active site. Zn(2+) is bound by residues Glu-202, Glu-227, and His-299. Residues Val-356–Val-376 form a helical membrane-spanning segment. Residues Lys-377 to Arg-384 lie on the Cytoplasmic side of the membrane. The chain crosses the membrane as a helical span at residues Val-385 to Gly-405. Over Asn-406–Met-415 the chain is Vacuolar. Residues Met-416–Val-436 traverse the membrane as a helical segment. At Asp-437–Lys-446 the chain is on the cytoplasmic side. Residues Leu-447–Ser-467 form a helical membrane-spanning segment. The Vacuolar portion of the chain corresponds to Gly-468–Glu-474. The chain crosses the membrane as a helical span at residues Phe-475 to Trp-495. Topologically, residues Thr-496 to Leu-539 are cytoplasmic. The chain crosses the membrane as a helical span at residues Leu-540–Val-560. An N-linked (GlcNAc...) asparagine glycan is attached at Asn-561. At Asn-561–His-572 the chain is on the vacuolar side. A helical membrane pass occupies residues Leu-573–Ile-593. At Thr-594–Arg-598 the chain is on the cytoplasmic side. Residues Tyr-599–His-619 form a helical membrane-spanning segment. The Vacuolar segment spans residues Pro-620–Val-837. N-linked (GlcNAc...) asparagine glycosylation is present at Asn-689.

It belongs to the peptidase M28 family. The cofactor is Zn(2+).

It is found in the vacuole membrane. In terms of biological role, may be involved in vacuolar sorting and osmoregulation. The polypeptide is Vacuolar membrane protease (Candida albicans (strain SC5314 / ATCC MYA-2876) (Yeast)).